A 97-amino-acid chain; its full sequence is MVKLNLSNLQHFAHKKGGGSTSNGRDSQAKRLGAKAADGQTVSGGSILYRQRGTHIYPGVNVGRGGDDTLFAKVEGVVRFERKGRDKKQVSVYPIAK.

The span at 1–10 (MVKLNLSNLQ) shows a compositional bias: polar residues. A propeptide spanning residues 1-12 (MVKLNLSNLQHF) is cleaved from the precursor. The tract at residues 1–38 (MVKLNLSNLQHFAHKKGGGSTSNGRDSQAKRLGAKAAD) is disordered.

The protein belongs to the bacterial ribosomal protein bL27 family. The N-terminus is cleaved by ribosomal processing cysteine protease Prp.

The protein is Large ribosomal subunit protein bL27 of Streptococcus equi subsp. zooepidemicus (strain H70).